The sequence spans 114 residues: YEKIGAEMVKEVAKKTDDVAGDGTTTATVLAQALVKEGLRNVAAGANPLGLKRGIEKAVEKVTETLLKSAKEVETKEQIAATAAISAGEQSIGDLIAEAMDKVGNEGVITVEES.

22–26 (DGTTT) contacts ATP.

This sequence belongs to the chaperonin (HSP60) family. In terms of assembly, forms a cylinder of 14 subunits composed of two heptameric rings stacked back-to-back. Interacts with the co-chaperonin GroES.

It localises to the cytoplasm. The catalysed reaction is ATP + H2O + a folded polypeptide = ADP + phosphate + an unfolded polypeptide.. Functionally, together with its co-chaperonin GroES, plays an essential role in assisting protein folding. The GroEL-GroES system forms a nano-cage that allows encapsulation of the non-native substrate proteins and provides a physical environment optimized to promote and accelerate protein folding. The protein is Chaperonin GroEL of Mycobacterium ulcerans.